A 92-amino-acid chain; its full sequence is PqqA binding protein (92 aa).

This sequence belongs to the PqqD family. In terms of assembly, monomer. Interacts with PqqE.

It participates in cofactor biosynthesis; pyrroloquinoline quinone biosynthesis. Functions as a PqqA binding protein and presents PqqA to PqqE, in the pyrroloquinoline quinone (PQQ) biosynthetic pathway. This is PqqA binding protein from Xanthomonas euvesicatoria pv. vesicatoria (strain 85-10) (Xanthomonas campestris pv. vesicatoria).